A 469-amino-acid polypeptide reads, in one-letter code: 1-aminocyclopropane-1-carboxylate synthase 8 (469 aa).

Substrate-binding residues include glutamate 47 and tyrosine 85. The residue at position 272 (lysine 272) is an N6-(pyridoxal phosphate)lysine.

This sequence belongs to the class-I pyridoxal-phosphate-dependent aminotransferase family. As to quaternary structure, homodimer and heterodimer. In vivo, the relevance of heterodimerization with other ACS enzymes is however unsure. Interacts with GRF3. It depends on pyridoxal 5'-phosphate as a cofactor. Post-translationally, may be processed at its C-terminus. In terms of tissue distribution, expressed in roots. Expressed at low level in flowers and siliques.

The catalysed reaction is S-adenosyl-L-methionine = 1-aminocyclopropane-1-carboxylate + S-methyl-5'-thioadenosine + H(+). The protein operates within alkene biosynthesis; ethylene biosynthesis via S-adenosyl-L-methionine; ethylene from S-adenosyl-L-methionine: step 1/2. Its function is as follows. 1-aminocyclopropane-1-carboxylate synthase (ACS) enzymes catalyze the conversion of S-adenosyl-L-methionine (SAM) into 1-aminocyclopropane-1-carboxylate (ACC), a direct precursor of ethylene. The polypeptide is 1-aminocyclopropane-1-carboxylate synthase 8 (ACS8) (Arabidopsis thaliana (Mouse-ear cress)).